A 296-amino-acid polypeptide reads, in one-letter code: Protoheme IX farnesyltransferase (296 aa).

The Cytoplasmic portion of the chain corresponds to 1-9 (MMFKQYLQV). The helical transmembrane segment at 10 to 28 (TKPGIIFGNLISVIGGFLL) threads the bilayer. At 29–37 (ASKGSIDYP) the chain is on the periplasmic side. A helical transmembrane segment spans residues 38–56 (LFIYTLVGVSLVVASGCVF). At 57–78 (NNYIDRDIDRKMERTKNRVLVK) the chain is on the cytoplasmic side. Residues 79-97 (GLISPGVSLVYATLLGIAG) form a helical membrane-spanning segment. The Periplasmic segment spans residues 98 to 107 (FMLLWFGANP). A helical transmembrane segment spans residues 108-126 (LACWLGVMGFVVYVGVYSL). Residues 127–197 (YMKRHSVYGT…YQAANIPVLP (71 aa)) are Cytoplasmic-facing. A helical transmembrane segment spans residues 198–216 (VVKGISVAKNHITLYIIAF). The Periplasmic segment spans residues 217 to 228 (AVATLMLTLGGY). The chain crosses the membrane as a helical span at residues 229 to 247 (AGYKYLVVAAAVSVWWLGM). Residues 248 to 268 (ALRGYKVEDDKVWARKLFGFS) lie on the Cytoplasmic side of the membrane. Residues 269 to 287 (IIAITALSIMMSVDFMVPN) traverse the membrane as a helical segment. Residues 288–296 (SQNLLTYVW) are Periplasmic-facing.

This sequence belongs to the UbiA prenyltransferase family. Protoheme IX farnesyltransferase subfamily.

It localises to the cell inner membrane. The catalysed reaction is heme b + (2E,6E)-farnesyl diphosphate + H2O = Fe(II)-heme o + diphosphate. It functions in the pathway porphyrin-containing compound metabolism; heme O biosynthesis; heme O from protoheme: step 1/1. Its function is as follows. Converts heme B (protoheme IX) to heme O by substitution of the vinyl group on carbon 2 of heme B porphyrin ring with a hydroxyethyl farnesyl side group. This chain is Protoheme IX farnesyltransferase, found in Salmonella typhimurium (strain LT2 / SGSC1412 / ATCC 700720).